Reading from the N-terminus, the 413-residue chain is Serine hydroxymethyltransferase (413 aa).

Residues leucine 117 and 121-123 (GHL) each bind (6S)-5,6,7,8-tetrahydrofolate. At lysine 226 the chain carries N6-(pyridoxal phosphate)lysine. Residues glutamate 239 and 349–351 (SPF) each bind (6S)-5,6,7,8-tetrahydrofolate.

Belongs to the SHMT family. In terms of assembly, homodimer. The cofactor is pyridoxal 5'-phosphate.

The protein resides in the cytoplasm. It carries out the reaction (6R)-5,10-methylene-5,6,7,8-tetrahydrofolate + glycine + H2O = (6S)-5,6,7,8-tetrahydrofolate + L-serine. The protein operates within one-carbon metabolism; tetrahydrofolate interconversion. Its pathway is amino-acid biosynthesis; glycine biosynthesis; glycine from L-serine: step 1/1. In terms of biological role, catalyzes the reversible interconversion of serine and glycine with tetrahydrofolate (THF) serving as the one-carbon carrier. This reaction serves as the major source of one-carbon groups required for the biosynthesis of purines, thymidylate, methionine, and other important biomolecules. Also exhibits THF-independent aldolase activity toward beta-hydroxyamino acids, producing glycine and aldehydes, via a retro-aldol mechanism. The protein is Serine hydroxymethyltransferase of Bacillus cereus (strain AH820).